The following is a 426-amino-acid chain: Enolase (426 aa).

Q163 lines the (2R)-2-phosphoglycerate pocket. Residue E205 is the Proton donor of the active site. D242, E285, and D312 together coordinate Mg(2+). (2R)-2-phosphoglycerate contacts are provided by K337, R366, S367, and K388. The active-site Proton acceptor is K337.

The protein belongs to the enolase family. The cofactor is Mg(2+).

It localises to the cytoplasm. The protein resides in the secreted. It is found in the cell surface. The catalysed reaction is (2R)-2-phosphoglycerate = phosphoenolpyruvate + H2O. Its pathway is carbohydrate degradation; glycolysis; pyruvate from D-glyceraldehyde 3-phosphate: step 4/5. In terms of biological role, catalyzes the reversible conversion of 2-phosphoglycerate (2-PG) into phosphoenolpyruvate (PEP). It is essential for the degradation of carbohydrates via glycolysis. The protein is Enolase of Desulfosudis oleivorans (strain DSM 6200 / JCM 39069 / Hxd3) (Desulfococcus oleovorans).